Here is a 324-residue protein sequence, read N- to C-terminus: Acetyl-coenzyme A carboxylase carboxyl transferase subunit alpha (324 aa).

The 255-residue stretch at 37–291 (KLDKRLDRLK…QEYVLQEWLK (255 aa)) folds into the CoA carboxyltransferase C-terminal domain.

The protein belongs to the AccA family. Acetyl-CoA carboxylase is a heterohexamer composed of biotin carboxyl carrier protein (AccB), biotin carboxylase (AccC) and two subunits each of ACCase subunit alpha (AccA) and ACCase subunit beta (AccD).

It localises to the cytoplasm. It carries out the reaction N(6)-carboxybiotinyl-L-lysyl-[protein] + acetyl-CoA = N(6)-biotinyl-L-lysyl-[protein] + malonyl-CoA. The protein operates within lipid metabolism; malonyl-CoA biosynthesis; malonyl-CoA from acetyl-CoA: step 1/1. Component of the acetyl coenzyme A carboxylase (ACC) complex. First, biotin carboxylase catalyzes the carboxylation of biotin on its carrier protein (BCCP) and then the CO(2) group is transferred by the carboxyltransferase to acetyl-CoA to form malonyl-CoA. This Chlamydia trachomatis serovar D (strain ATCC VR-885 / DSM 19411 / UW-3/Cx) protein is Acetyl-coenzyme A carboxylase carboxyl transferase subunit alpha.